We begin with the raw amino-acid sequence, 261 residues long: Small ribosomal subunit protein eS4z (261 aa).

The 63-residue stretch at 42–104 (LPLVLIIRNR…TNENFRLLYD (63 aa)) folds into the S4 RNA-binding domain.

This sequence belongs to the eukaryotic ribosomal protein eS4 family.

It localises to the cytoplasm. This is Small ribosomal subunit protein eS4z (RPS4A) from Arabidopsis thaliana (Mouse-ear cress).